Here is a 229-residue protein sequence, read N- to C-terminus: E3 ubiquitin-protein ligase RNF114 (229 aa).

The disordered stretch occupies residues 1–23; sequence MAAAQPESRDGAAQSAKPASETD. Residues 30 to 69 form an RING-type zinc finger; the sequence is CPVCLEVFEKPVQVPCGHVFCSACLQECLKPKKPVCGVCR. Residues Cys-92 and Cys-95 each contribute to the Zn(2+) site. The C2HC RNF-type zinc-finger motif lies at 92–111; the sequence is CHGCRKNFILSKIRAHVTSC. Residue Lys-103 is modified to N6-acetyllysine. Residues His-107 and Cys-111 each coordinate Zn(2+). N6-acetyllysine is present on Lys-113.

In terms of assembly, interacts with XAF1, the interaction increases XAF1 stability and proapoptotic effects, and may regulate IFN signaling. Autoubiquitinated. Polyubiquitinated in the presence of E2 enzymes UBE2D1, UBE2D2 and UBE2D3, but only monoubiquitinated in the presence of UBE2E1.

The protein localises to the cytoplasm. It is found in the nucleus. The enzyme catalyses S-ubiquitinyl-[E2 ubiquitin-conjugating enzyme]-L-cysteine + [acceptor protein]-L-lysine = [E2 ubiquitin-conjugating enzyme]-L-cysteine + N(6)-ubiquitinyl-[acceptor protein]-L-lysine.. It participates in protein modification; protein ubiquitination. E3 ubiquitin-protein ligase that promotes the ubiquitination of various substrates. In turn, participates in the regulation of many biological processes including cell cycle, apoptosis, osteoclastogenesis as well as innate or adaptive immunity. Acts as negative regulator of NF-kappa-B-dependent transcription by promoting the ubiquitination and stabilization of the NF-kappa-B inhibitor TNFAIP3. May promote the ubiquitination of TRAF6 as well. Also acts as a negative regulator of T-cell activation. Inhibits cellular dsRNA responses and interferon production by targeting MAVS component for proteasomal degradation. Ubiquitinates the CDK inhibitor CDKN1A leading to its degradationand probably also CDKN1B and CDKN1C. This activity stimulates cell cycle G1-to-S phase transition and suppresses cellular senescence. May play a role in spermatogenesis. The sequence is that of E3 ubiquitin-protein ligase RNF114 (Rnf114) from Mus musculus (Mouse).